A 92-amino-acid polypeptide reads, in one-letter code: Protein canopy homolog 1 (92 aa).

The protein belongs to the canopy family.

In Homo sapiens (Human), this protein is Protein canopy homolog 1 (CNPY1).